The chain runs to 143 residues: Transcription antitermination protein NusB (143 aa).

It belongs to the NusB family.

In terms of biological role, involved in transcription antitermination. Required for transcription of ribosomal RNA (rRNA) genes. Binds specifically to the boxA antiterminator sequence of the ribosomal RNA (rrn) operons. This Clostridium botulinum (strain Kyoto / Type A2) protein is Transcription antitermination protein NusB.